A 974-amino-acid chain; its full sequence is Kinase-interacting protein 1 (974 aa).

Residues 10–90 (YSWWAASHIR…ERYDHLSKEL (81 aa)) form the NAB domain. Residues 151 to 170 (STASKQKQGKQSSKIEDAAK) are disordered. A coiled-coil region spans residues 173–423 (LSKNEAIEEI…DVVNQNSCLR (251 aa)). Residues 586-614 (AQPTPAEKGDEKVSAQSGNTSVYETHTQK) are disordered. The span at 599–610 (SAQSGNTSVYET) shows a compositional bias: polar residues. The stretch at 641–697 (NEYTAILKNYKEVTKKLSDIEKKDRDTEFELTLQTRELKSAIAKRDEEIHNLRQKLS) forms a coiled coil. Residues 714–740 (LLDPSDPSSARGLKPEDLPQIKDGDDE) are disordered. The segment covering 726 to 736 (LKPEDLPQIKD) has biased composition (basic and acidic residues). 2 coiled-coil regions span residues 784–807 (HQIQ…RDKE) and 882–905 (AAKF…ELEA).

As to quaternary structure, homodimer or homooligomer. Interacts with PRK1. In terms of processing, phosphorylated by PRK1. As to expression, expressed in mature pollen grains and pollen tubes, but not in style, ovary, petal, leaf, root or sepal.

It localises to the cytoplasm. In terms of biological role, probably involved in the receptor-like kinase-mediated signal transduction pathway. The chain is Kinase-interacting protein 1 from Petunia integrifolia (Violet-flowered petunia).